Reading from the N-terminus, the 150-residue chain is Large ribosomal subunit protein bL9 (150 aa).

This sequence belongs to the bacterial ribosomal protein bL9 family.

In terms of biological role, binds to the 23S rRNA. The sequence is that of Large ribosomal subunit protein bL9 from Buchnera aphidicola subsp. Schizaphis graminum (strain Sg).